Here is a 259-residue protein sequence, read N- to C-terminus: UPF0014 membrane protein slr1647 (259 aa).

Helical transmembrane passes span Ala-4–Ile-24, Leu-34–Tyr-54, Phe-55–Met-75, Leu-98–Ile-118, Tyr-128–Gly-148, Met-195–Gly-215, and Ile-225–Thr-245.

This sequence belongs to the UPF0014 family.

It is found in the cell membrane. This Synechocystis sp. (strain ATCC 27184 / PCC 6803 / Kazusa) protein is UPF0014 membrane protein slr1647.